Consider the following 346-residue polypeptide: L-threonine 3-dehydrogenase (346 aa).

Position 42 (cysteine 42) interacts with Zn(2+). Catalysis depends on charge relay system residues threonine 44 and histidine 47. The Zn(2+) site is built by histidine 67, glutamate 68, cysteine 97, cysteine 100, cysteine 103, and cysteine 111. Residues isoleucine 179, aspartate 199, arginine 204, 266–268, and 291–292 each bind NAD(+); these read LSL and IT.

It belongs to the zinc-containing alcohol dehydrogenase family. Homotetramer. Zn(2+) serves as cofactor.

It localises to the cytoplasm. It catalyses the reaction L-threonine + NAD(+) = (2S)-2-amino-3-oxobutanoate + NADH + H(+). It functions in the pathway amino-acid degradation; L-threonine degradation via oxydo-reductase pathway; glycine from L-threonine: step 1/2. Catalyzes the NAD(+)-dependent oxidation of L-threonine to 2-amino-3-ketobutyrate. In Bacillus licheniformis (strain ATCC 14580 / DSM 13 / JCM 2505 / CCUG 7422 / NBRC 12200 / NCIMB 9375 / NCTC 10341 / NRRL NRS-1264 / Gibson 46), this protein is L-threonine 3-dehydrogenase.